Consider the following 81-residue polypeptide: MATSKSGGSSKNGRDSISKRLGVKRSGGQFVRAGEIIIRQRGTKFHKGKNSGLGRDHTIFALKDGIVEFKTSKGRKYINII.

Positions 1 to 11 (MATSKSGGSSK) are enriched in polar residues. A disordered region spans residues 1-24 (MATSKSGGSSKNGRDSISKRLGVK).

The protein belongs to the bacterial ribosomal protein bL27 family.

The protein is Large ribosomal subunit protein bL27 of Borrelia duttonii (strain Ly).